The sequence spans 277 residues: 2,3,4,5-tetrahydropyridine-2,6-dicarboxylate N-succinyltransferase (277 aa).

Substrate is bound by residues arginine 106 and aspartate 143.

Belongs to the transferase hexapeptide repeat family. As to quaternary structure, homotrimer.

It localises to the cytoplasm. The catalysed reaction is (S)-2,3,4,5-tetrahydrodipicolinate + succinyl-CoA + H2O = (S)-2-succinylamino-6-oxoheptanedioate + CoA. It participates in amino-acid biosynthesis; L-lysine biosynthesis via DAP pathway; LL-2,6-diaminopimelate from (S)-tetrahydrodipicolinate (succinylase route): step 1/3. This chain is 2,3,4,5-tetrahydropyridine-2,6-dicarboxylate N-succinyltransferase, found in Xylella fastidiosa (strain 9a5c).